A 645-amino-acid polypeptide reads, in one-letter code: Cytochrome c oxidase subunit 1 (645 aa).

The helical transmembrane segment at 8-28 (LNYFYFSMWTGLSGAALATMI) threads the bilayer. Residues Glu-31 and Gly-36 each contribute to the Ca(2+) site. Residue His-54 participates in Fe(II)-heme a binding. 8 helical membrane-spanning segments follow: residues 56-76 (LIMVFFVVVPIFFGGFANFLI), 90-110 (LNSIGFWIQPLGFLLVAKIAF), 247-267 (VLSVAVVLAGISTTISLLTLI), 282-302 (VLIPFITISLLLTLRLLAIVT), 337-357 (LFWFFGHPEVYILIIPSFGVA), 376-396 (IWAVYVMAYMGFVVWGHHMYL), 410-430 (ITIMICLPATIKLVNWTLTLA), and 438-458 (LVFLFFCSYVFFFLTGGFTGM). His-343 is a Cu cation binding site. A cross-link (1'-histidyl-3'-tyrosine (His-Tyr)) is located at residues 343–347 (HPEVY). Tyr-347 contributes to the O2 binding site. Residues His-392 and His-393 each contribute to the Cu cation site. Mg(2+) contacts are provided by His-470 and Asp-471. 3 consecutive transmembrane segments (helical) span residues 475–495 (VVAHFHLMLAGAAMMGAFTGL), 513–533 (FLHLVYYSAGIWTTFFPMFFL), and 555–575 (LASCGHFLTLAGVCFFFFGIF). His-478 contributes to the heme a3 binding site. A Fe(II)-heme a-binding site is contributed by His-480.

The protein belongs to the heme-copper respiratory oxidase family. In terms of assembly, component of the cytochrome c oxidase (complex IV, CIV), a multisubunit enzyme composed of a catalytic core of 3 subunits and several supernumerary subunits. The complex exists as a monomer or a dimer and forms supercomplexes (SCs) in the inner mitochondrial membrane with ubiquinol-cytochrome c oxidoreductase (cytochrome b-c1 complex, complex III, CIII). Requires heme as cofactor. The cofactor is Cu cation.

The protein resides in the mitochondrion inner membrane. It carries out the reaction 4 Fe(II)-[cytochrome c] + O2 + 8 H(+)(in) = 4 Fe(III)-[cytochrome c] + 2 H2O + 4 H(+)(out). The protein operates within energy metabolism; oxidative phosphorylation. Its function is as follows. Component of the cytochrome c oxidase, the last enzyme in the mitochondrial electron transport chain which drives oxidative phosphorylation. The respiratory chain contains 3 multisubunit complexes succinate dehydrogenase (complex II, CII), ubiquinol-cytochrome c oxidoreductase (cytochrome b-c1 complex, complex III, CIII) and cytochrome c oxidase (complex IV, CIV), that cooperate to transfer electrons derived from NADH and succinate to molecular oxygen, creating an electrochemical gradient over the inner membrane that drives transmembrane transport and the ATP synthase. Cytochrome c oxidase is the component of the respiratory chain that catalyzes the reduction of oxygen to water. Electrons originating from reduced cytochrome c in the intermembrane space (IMS) are transferred via the dinuclear copper A center (CU(A)) of subunit 2 and heme A of subunit 1 to the active site in subunit 1, a binuclear center (BNC) formed by heme A3 and copper B (CU(B)). The BNC reduces molecular oxygen to 2 water molecules using 4 electrons from cytochrome c in the IMS and 4 protons from the mitochondrial matrix. This chain is Cytochrome c oxidase subunit 1 (COI), found in Paramecium tetraurelia.